The primary structure comprises 368 residues: PPE family immunomodulator PPE68 (368 aa).

2 disordered regions span residues 255–280 and 312–368; these read LGTS…LLRA and AAAG…EDDW. A compositionally biased stretch (low complexity) spans 312–327; sequence AAAGSSATGGAAPVGA. Residues 354–368 are compositionally biased toward acidic residues; sequence REEDDEDDWDEEDDW.

The protein belongs to the mycobacterial PPE family. In terms of assembly, homodimer. Interacts with PE35. PE35/PPE68 complex interacts with human TLR2.

Its subcellular location is the secreted. It localises to the cell wall. The protein resides in the cell membrane. It is found in the cell surface. In terms of biological role, plays a major role in RD1-associated pathogenesis, and may contribute to the establishment and maintenance of M.tuberculosis infection. Together with PE35, stimulates the secretion of IL-10 and MCP-1 from human macrophages, via the interaction with human Toll-like receptor 2 (TLR2). This chain is PPE family immunomodulator PPE68 (PPE68), found in Mycobacterium tuberculosis (strain CDC 1551 / Oshkosh).